The chain runs to 677 residues: DNA ligase (677 aa).

NAD(+) contacts are provided by residues 36-40 (DAEYD), 85-86 (SI), and E122. The active-site N6-AMP-lysine intermediate is K124. NAD(+) is bound by residues R145, E181, K298, and K322. Zn(2+) is bound by residues C416, C419, C434, and C440. The 78-residue stretch at 600–677 (LTPRPLAGKT…DEAALRALLD (78 aa)) folds into the BRCT domain.

The protein belongs to the NAD-dependent DNA ligase family. LigA subfamily. It depends on Mg(2+) as a cofactor. Mn(2+) serves as cofactor.

The catalysed reaction is NAD(+) + (deoxyribonucleotide)n-3'-hydroxyl + 5'-phospho-(deoxyribonucleotide)m = (deoxyribonucleotide)n+m + AMP + beta-nicotinamide D-nucleotide.. Functionally, DNA ligase that catalyzes the formation of phosphodiester linkages between 5'-phosphoryl and 3'-hydroxyl groups in double-stranded DNA using NAD as a coenzyme and as the energy source for the reaction. It is essential for DNA replication and repair of damaged DNA. In Methylibium petroleiphilum (strain ATCC BAA-1232 / LMG 22953 / PM1), this protein is DNA ligase.